Here is a 489-residue protein sequence, read N- to C-terminus: Glycogen synthase (489 aa).

Lysine 15 serves as a coordination point for ADP-alpha-D-glucose.

This sequence belongs to the glycosyltransferase 1 family. Bacterial/plant glycogen synthase subfamily.

It catalyses the reaction [(1-&gt;4)-alpha-D-glucosyl](n) + ADP-alpha-D-glucose = [(1-&gt;4)-alpha-D-glucosyl](n+1) + ADP + H(+). It functions in the pathway glycan biosynthesis; glycogen biosynthesis. Synthesizes alpha-1,4-glucan chains using ADP-glucose. This Francisella tularensis subsp. novicida (strain U112) protein is Glycogen synthase.